A 319-amino-acid polypeptide reads, in one-letter code: MNPYETEIYKVVPIPNKGMGMIAKVKIPVGTRIFAETPLIRTKSDAKEIEEALSTKTKEEQEAFHRLFNAHPDTMGPFLGPFYSNALTIDETKGGMFLLGSRMNHDCSPNVKHTWNPRLDQVTVHAVRDIEAGEEILTTYIDLHKSHTERQKILLEHFGFKCYCSVCSVEERKIRKISDLRRKQLAYYDRTMAKMCIVNPRGALRALRHRIHIAHEELLFGRLDIIALLDAFRLCVIHGDFERASIFAKKGTKAISLYEGTDSEKYLKISKYVENPRSHALAEGVPALPLFLEEDDELSDLEDNLWGCKLEEDVYSDTD.

The region spanning 4-141 (YETEIYKVVP…AGEEILTTYI (138 aa)) is the SET domain. Ser-316 is subject to Phosphoserine. Position 318 is a phosphothreonine (Thr-318).

Belongs to the class V-like SAM-binding methyltransferase superfamily.

Its subcellular location is the nucleus. The protein localises to the chromosome. It is found in the cytoplasm. The catalysed reaction is L-lysyl-[histone] + S-adenosyl-L-methionine = N(6)-methyl-L-lysyl-[histone] + S-adenosyl-L-homocysteine + H(+). In terms of biological role, histone methyltransferase that monomethylates 'Lys-5', 'Lys-8' and 'Lys-12' of histone H4 (H4K5me1, H4K8me1 and H4K12me1, respectively), thereby controlling gene expression and remodeling chromatin structures. Monomethylation of 'Lys-5' of histone H4 (H4K5me1) is required for subsequent acetylation and formation of N6-acetyl-N6-methyllysine (H4K5acme). This Schizosaccharomyces pombe (strain 972 / ATCC 24843) (Fission yeast) protein is Histone-lysine N-methyltransferase set5 (set5).